An 865-amino-acid polypeptide reads, in one-letter code: cGMP-specific 3',5'-cyclic phosphodiesterase (865 aa).

Serine 92 bears the Phosphoserine mark. GAF domains are found at residues 154–304 (DVTA…GIVL) and 336–493 (SLEV…GLGI). The region spanning 526–850 (ETRELQALSA…QKWQALAEQQ (325 aa)) is the PDEase domain. The active-site Proton donor is the histidine 603. Zn(2+) contacts are provided by histidine 607, histidine 643, aspartate 644, and aspartate 754. Aspartate 644 lines the Mg(2+) pocket. 3',5'-cyclic GMP is bound at residue glutamine 807.

The protein belongs to the cyclic nucleotide phosphodiesterase family. The cofactor is Zn(2+). Requires Mg(2+) as cofactor. In terms of processing, phosphorylation is regulated by binding of cGMP to the two allosteric sites. Phosphorylation by PRKG1 leads to its activation.

The enzyme catalyses 3',5'-cyclic GMP + H2O = GMP + H(+). It functions in the pathway purine metabolism; 3',5'-cyclic GMP degradation; GMP from 3',5'-cyclic GMP: step 1/1. Functionally, plays a role in signal transduction by regulating the intracellular concentration of cyclic nucleotides. This phosphodiesterase catalyzes the specific hydrolysis of cGMP to 5'-GMP. Specifically regulates nitric-oxide-generated cGMP. This is cGMP-specific 3',5'-cyclic phosphodiesterase (Pde5a) from Mus musculus (Mouse).